A 334-amino-acid chain; its full sequence is Putative 2-hydroxyacid dehydrogenase UNK4.10 (334 aa).

Residues Gly166–Ile167, Thr244–Arg246, and Asp270 contribute to the NAD(+) site. Arg246 is an active-site residue. Residue Glu275 is part of the active site. His293 functions as the Proton donor in the catalytic mechanism. His293–Thr296 provides a ligand contact to NAD(+).

The protein belongs to the D-isomer specific 2-hydroxyacid dehydrogenase family.

This Schizosaccharomyces pombe (strain 972 / ATCC 24843) (Fission yeast) protein is Putative 2-hydroxyacid dehydrogenase UNK4.10.